The sequence spans 22 residues: Oxygen-evolving enhancer protein 2 (22 aa).

The protein belongs to the PsbP family.

It localises to the plastid. Its subcellular location is the chloroplast thylakoid membrane. May be involved in the regulation of photosystem II. The protein is Oxygen-evolving enhancer protein 2 of Physcomitrium patens (Spreading-leaved earth moss).